A 324-amino-acid polypeptide reads, in one-letter code: Phospho-N-acetylmuramoyl-pentapeptide-transferase (324 aa).

10 helical membrane-spanning segments follow: residues 5–25, 52–72, 77–97, 122–142, 149–169, 176–196, 201–221, 227–247, 253–273, and 302–322; these read GLLV…PLFI, PTMG…IMAI, LGAE…IGFL, VIAI…YIMI, FELG…GSNA, LDGL…IIAV, FGVA…LVFN, VFMG…VAIL, LLVI…IQVI, and VVVT…YIGV.

This sequence belongs to the glycosyltransferase 4 family. MraY subfamily. Requires Mg(2+) as cofactor.

Its subcellular location is the cell membrane. It carries out the reaction UDP-N-acetyl-alpha-D-muramoyl-L-alanyl-gamma-D-glutamyl-meso-2,6-diaminopimeloyl-D-alanyl-D-alanine + di-trans,octa-cis-undecaprenyl phosphate = di-trans,octa-cis-undecaprenyl diphospho-N-acetyl-alpha-D-muramoyl-L-alanyl-D-glutamyl-meso-2,6-diaminopimeloyl-D-alanyl-D-alanine + UMP. It participates in cell wall biogenesis; peptidoglycan biosynthesis. Catalyzes the initial step of the lipid cycle reactions in the biosynthesis of the cell wall peptidoglycan: transfers peptidoglycan precursor phospho-MurNAc-pentapeptide from UDP-MurNAc-pentapeptide onto the lipid carrier undecaprenyl phosphate, yielding undecaprenyl-pyrophosphoryl-MurNAc-pentapeptide, known as lipid I. In Bacillus anthracis, this protein is Phospho-N-acetylmuramoyl-pentapeptide-transferase.